A 684-amino-acid polypeptide reads, in one-letter code: UvrABC system protein B (684 aa).

The Helicase ATP-binding domain occupies 32–420 (DGVLRGDRWQ…GGVVVEQLIR (389 aa)). Position 45 to 52 (45 to 52 (GVTGSGKT)) interacts with ATP. Residues 98-121 (YYDFYQPEAYIPSLDKYIAKDLKI) carry the Beta-hairpin motif. In terms of domain architecture, Helicase C-terminal spans 437–603 (QIDHLLARIR…SIIKSVDQVL (167 aa)). The UVR domain maps to 643–678 (MLMVAEMNAEMQKAAEQTDYEKAAYLRDEILMLQER).

This sequence belongs to the UvrB family. Forms a heterotetramer with UvrA during the search for lesions. Interacts with UvrC in an incision complex.

The protein localises to the cytoplasm. Functionally, the UvrABC repair system catalyzes the recognition and processing of DNA lesions. A damage recognition complex composed of 2 UvrA and 2 UvrB subunits scans DNA for abnormalities. Upon binding of the UvrA(2)B(2) complex to a putative damaged site, the DNA wraps around one UvrB monomer. DNA wrap is dependent on ATP binding by UvrB and probably causes local melting of the DNA helix, facilitating insertion of UvrB beta-hairpin between the DNA strands. Then UvrB probes one DNA strand for the presence of a lesion. If a lesion is found the UvrA subunits dissociate and the UvrB-DNA preincision complex is formed. This complex is subsequently bound by UvrC and the second UvrB is released. If no lesion is found, the DNA wraps around the other UvrB subunit that will check the other stand for damage. This Chlorobaculum tepidum (strain ATCC 49652 / DSM 12025 / NBRC 103806 / TLS) (Chlorobium tepidum) protein is UvrABC system protein B.